Reading from the N-terminus, the 451-residue chain is Probable asparagine--tRNA ligase, cytoplasmic (451 aa).

Belongs to the class-II aminoacyl-tRNA synthetase family.

It is found in the cytoplasm. It catalyses the reaction tRNA(Asn) + L-asparagine + ATP = L-asparaginyl-tRNA(Asn) + AMP + diphosphate + H(+). The polypeptide is Probable asparagine--tRNA ligase, cytoplasmic (Encephalitozoon cuniculi (strain GB-M1) (Microsporidian parasite)).